We begin with the raw amino-acid sequence, 255 residues long: Ras-like protein family member 12 (255 aa).

GTP is bound by residues 30 to 37 (GAMGSGKS), 77 to 81 (DTADQ), and 137 to 140 (NKVD).

This sequence belongs to the small GTPase superfamily. Ras family.

The enzyme catalyses GTP + H2O = GDP + phosphate + H(+). This Danio rerio (Zebrafish) protein is Ras-like protein family member 12 (RASL12).